We begin with the raw amino-acid sequence, 97 residues long: Small ribosomal subunit protein bS20 (97 aa).

Belongs to the bacterial ribosomal protein bS20 family.

Binds directly to 16S ribosomal RNA. This is Small ribosomal subunit protein bS20 from Methylibium petroleiphilum (strain ATCC BAA-1232 / LMG 22953 / PM1).